Consider the following 483-residue polypeptide: Argininosuccinate lyase (483 aa).

Belongs to the lyase 1 family. Argininosuccinate lyase subfamily.

Its subcellular location is the cytoplasm. It carries out the reaction 2-(N(omega)-L-arginino)succinate = fumarate + L-arginine. Its pathway is amino-acid biosynthesis; L-arginine biosynthesis; L-arginine from L-ornithine and carbamoyl phosphate: step 3/3. In Archaeoglobus fulgidus (strain ATCC 49558 / DSM 4304 / JCM 9628 / NBRC 100126 / VC-16), this protein is Argininosuccinate lyase.